The sequence spans 461 residues: Coronin-1A (461 aa).

Position 2 is an N-acetylserine (serine 2). Residue serine 2 is modified to Phosphoserine; by PKC. 7 WD repeats span residues 13-63 (HVFG…LVLP), 73-110 (NVPL…MVWE), 123-160 (PVVT…LVWD), 164-204 (GAAV…RVIE), 207-251 (KGTV…ALWD), 258-296 (PLSL…RYFE), and 302-349 (PFLH…EPIA). Residues 407 to 418 (NRGLDSARRRAT) show a composition bias toward basic and acidic residues. The interval 407–431 (NRGLDSARRRATPEPSSTLSSDTVS) is disordered. Serine 412 is modified (phosphoserine; by PKC). Threonine 418 carries the phosphothreonine modification. A compositionally biased stretch (polar residues) spans 420-430 (EPSSTLSSDTV). Serine 422 is subject to Phosphoserine. Residues 425–461 (LSSDTVSRLEEDVRNLNAIVQKLQERLDRLEETVQAK) adopt a coiled-coil conformation.

This sequence belongs to the WD repeat coronin family. In terms of assembly, binds actin. Post-translationally, phosphorylation at Ser-412 by PKC strongly down-regulates the association with actin. In terms of processing, polyubiquitinated by RNF128 with 'Lys-48'-linked chains, leading to proteasomal degradation.

The protein resides in the cytoplasm. It is found in the cytoskeleton. The protein localises to the cell cortex. Its subcellular location is the cytoplasmic vesicle. It localises to the phagosome membrane. Its function is as follows. May be a crucial component of the cytoskeleton of highly motile cells, functioning both in the invagination of large pieces of plasma membrane, as well as in forming protrusions of the plasma membrane involved in cell locomotion. This chain is Coronin-1A (Coro1a), found in Rattus norvegicus (Rat).